The primary structure comprises 132 residues: Antileukoproteinase (132 aa).

Positions 1–25 (MKSSGLFPFLVLLALGTLAPWAVEG) are cleaved as a signal peptide. 2 WAP domains span residues 28-76 (KSFK…LDPV) and 82-130 (TRRK…VSPV). 8 disulfide bridges follow: Cys-35–Cys-64, Cys-43–Cys-68, Cys-51–Cys-63, Cys-57–Cys-72, Cys-89–Cys-118, Cys-96–Cys-122, Cys-105–Cys-117, and Cys-111–Cys-126. The elastase inhibitory domain stretch occupies residues 84 to 132 (RKPGKCPVTYGQCLMLNPPNFCEMDGQCKRDLKCCMGMCGKSCVSPVKA).

In terms of assembly, interacts with GRN; interaction protects progranulin from proteolysis. Detected in blood plasma. Detected in bone marrow myeloid cells. Detected in airway sputum. Detected in parotid gland secretions. Detected in seminal plasma (at protein level). Detected in uterus cervix.

The protein resides in the secreted. Its function is as follows. Acid-stable proteinase inhibitor with strong affinities for trypsin, chymotrypsin, elastase, and cathepsin G. Modulates the inflammatory and immune responses after bacterial infection, and after infection by the intracellular parasite L.major. Down-regulates responses to bacterial lipopolysaccharide (LPS). Plays a role in regulating the activation of NF-kappa-B and inflammatory responses. Has antimicrobial activity against mycobacteria, but not against salmonella. Contributes to normal resistance against infection by M.tuberculosis. Required for normal resistance to infection by L.major. Required for normal wound healing, probably by preventing tissue damage by limiting protease activity. Together with ELANE, required for normal differentiation and proliferation of bone marrow myeloid cells. This Homo sapiens (Human) protein is Antileukoproteinase (SLPI).